A 465-amino-acid chain; its full sequence is FAD-dependent monooxygenase pyr5 (465 aa).

The first 16 residues, 1 to 16, serve as a signal peptide directing secretion; that stretch reads MRVLIIGGSIAGLTLA. FAD is bound by residues glutamate 30, glycine 44, and arginine 103. Tyrosine 210 is an active-site residue. Residues aspartate 306 and alanine 319 each coordinate FAD. Residues 440–456 traverse the membrane as a helical segment; that stretch reads PTFPLTVAGLCLVAIVI.

This sequence belongs to the paxM FAD-dependent monooxygenase family. FAD is required as a cofactor.

It localises to the membrane. It catalyses the reaction 4-hydroxy-3-[(2E,6E)-farnesyl]-6-(pyridin-3-yl)-2H-pyran-2-one + NADPH + O2 + H(+) = 2-oxo-3-[(8S)-epoxy-(2E,6E)-farnesyl]-6-(pyridin-3-yl)-2H-pyran-4-olate + NADP(+) + H2O. It participates in secondary metabolite biosynthesis; terpenoid biosynthesis. In terms of biological role, FAD-dependent monooxygenase; part of the gene cluster that mediates the biosynthesis of pyripyropene A, a specific human acyl-coenzyme A:cholesterol acyltransferase 2 inhibitor. The first step of the pathway is the synthesis of nicotinyl-CoA from nicotinic acid by the nicotinic acid-CoA ligase pyr1. Nicotinyl-CoA is then a substrate of polyketide synthase pyr2 to produce 4-hydroxy-6-(3-pyridinyl)-2H-pyran-2-one (HPPO) which is further prenylated by the polyprenyl transferase pyr6 to yield farnesyl-HPPO. The next steps consist of an epoxidation of farnesyl-HPPO to epoxyfarnesyl-HPPO by FAD-dependent monooxygenase pyr5 and a cyclization of the terpenoid portion by the terpene cyclase pyr4 to yield deacetyl-pyripyropene E. The 2 cytochrome P450 monooxygenases pyr3 and pyr9, and the 2 acetyltransferases pyr7 and pyr8 are involved in the conversion of deacetyl-pyripyropene E into pyripyropene A through several cycles of oxidation and acetylation steps. Pyr7 acetylates deacetyl-pyripyropene E to pyripyropene E which is oxidized to 11-deacetyl-pyripyropene O by pyr3, which is in turn acetylated into pyripyropene O by pyr8. Pyripyropene O is then oxidized to deacetyl-pyripyropene A by pyr9. Deacetyl-pyripyropene A is finally acetylated to pyripyropene A by pyr8. This is FAD-dependent monooxygenase pyr5 from Aspergillus fumigatus (strain ATCC MYA-4609 / CBS 101355 / FGSC A1100 / Af293) (Neosartorya fumigata).